The chain runs to 302 residues: 1,2-dihydroxynaphthalene dioxygenase (302 aa).

2 consecutive VOC domains span residues 9–124 (ELGY…IFWG) and 149–270 (GLGH…PGWR). Residue His152 coordinates Fe cation. Substrate-binding positions include His152, 199 to 200 (DH), His215, and Tyr256. Position 215 (His215) interacts with Fe cation. Residue Glu266 participates in Fe cation binding.

This sequence belongs to the extradiol ring-cleavage dioxygenase family. Requires Fe(2+) as cofactor.

The enzyme catalyses naphthalene-1,2-diol + O2 = 2-hydroxychromene-2-carboxylate + H(+). The protein operates within aromatic compound metabolism; naphthalene degradation. Inhibited by bathophenanthroline sulfonate, o-phenanthroline, 8-hydroxyquinoline, 2,2'-dipyridyl and p-chlormercuribenzoate. Also inhibited by Hg(2+), Cu(2+), Co(2+) and Fe(3+) ions. Its function is as follows. Involved in the naphthalene catabolic pathway. Catalyzes the meta-cleavage of 1,2-dihydroxynaphthalene (1,2-DHN) to yield 2-hydroxychromene-2-carboxylic acid. Can also cleave 3-methylcatechol and 4-methylcatechol. The sequence is that of 1,2-dihydroxynaphthalene dioxygenase (nahC) from Pseudomonas putida (Arthrobacter siderocapsulatus).